The following is a 538-amino-acid chain: Syncytin-1 (538 aa).

The signal sequence occupies residues Met1–Thr20. Topologically, residues Ala21 to Gln443 are extracellular. N-linked (GlcNAc...) asparagine glycosylation occurs at Asn169. Positions Cys186–Cys189 match the CXXC motif. 3 disulfide bridges follow: Cys186–Cys189, Cys186–Cys405, and Cys397–Cys404. 5 N-linked (GlcNAc...) asparagine glycosylation sites follow: Asn208, Asn214, Asn234, Asn242, and Asn281. Residues Ile320–Ile340 are fusion peptide. The segment at Leu380–Thr396 is immunosuppression. Residues Cys397–Tyr406 carry the CX6CC motif. Asn409 carries an N-linked (GlcNAc...) asparagine glycan. Residues Trp444 to Phe464 traverse the membrane as a helical segment. Residues Gly465–Lys484 form an essential for the fusiogenic function region. The Cytoplasmic segment spans residues Gly465–Ser538. Positions Lys496–Ser538 are disordered.

Belongs to the gamma type-C retroviral envelope protein family. HERV class-I W env subfamily. As to quaternary structure, the mature envelope protein (Env) consists of a trimer of SU-TM heterodimers attached probably by a labile interchain disulfide bond. Interacts with the C-type lectin CD209/DC-SIGN. Post-translationally, specific enzymatic cleavages in vivo yield mature proteins. Envelope glycoproteins are synthesized as an inactive precursor that is heavily N-glycosylated and processed likely by furin in the Golgi to yield the mature SU and TM proteins. The cleavage site between SU and TM requires the minimal sequence [KR]-X-[KR]-R. The intracytoplasmic tail cleavage by the viral protease that is required for the fusiogenic activity of some retroviruses envelope proteins seems to have been lost during evolution. In terms of processing, the CXXC motif is highly conserved across a broad range of retroviral envelope proteins. It is thought to participate in the formation of a labile disulfide bond possibly with the CX6CC motif present in the transmembrane protein. Isomerization of the intersubunit disulfide bond to an SU intrachain disulfide bond is thought to occur upon receptor recognition in order to allow membrane fusion. In terms of tissue distribution, expressed at higher level in placental syncytiotrophoblast. Expressed at intermediate level in testis. Seems also to be found at low level in adrenal tissue, bone marrow, breast, colon, kidney, ovary, prostate, skin, spleen, thymus, thyroid, brain and trachea. Both mRNA and protein levels are significantly increased in the brain of individuals with multiple sclerosis, particularly in astrocytes and microglia.

It is found in the cell membrane. It localises to the virion. Functionally, this endogenous retroviral envelope protein has retained its original fusogenic properties and participates in trophoblast fusion and the formation of a syncytium during placenta morphogenesis. May induce fusion through binding of SLC1A4 and SLC1A5. Its function is as follows. Endogenous envelope proteins may have kept, lost or modified their original function during evolution. Retroviral envelope proteins mediate receptor recognition and membrane fusion during early infection. The surface protein (SU) mediates receptor recognition, while the transmembrane protein (TM) acts as a class I viral fusion protein. The protein may have at least 3 conformational states: pre-fusion native state, pre-hairpin intermediate state, and post-fusion hairpin state. During viral and target cell membrane fusion, the coiled coil regions (heptad repeats) assume a trimer-of-hairpins structure, positioning the fusion peptide in close proximity to the C-terminal region of the ectodomain. The formation of this structure appears to drive apposition and subsequent fusion of membranes. This Homo sapiens (Human) protein is Syncytin-1 (ERVW-1).